The chain runs to 199 residues: Thymidine kinase (199 aa).

ATP contacts are provided by residues glycine 15–serine 22 and aspartate 88–glutamine 91. The Proton acceptor role is filled by glutamate 89. The Zn(2+) site is built by cysteine 145, cysteine 148, cysteine 183, and histidine 186.

It belongs to the thymidine kinase family. Homotetramer.

It localises to the cytoplasm. It catalyses the reaction thymidine + ATP = dTMP + ADP + H(+). The sequence is that of Thymidine kinase from Staphylococcus aureus (strain USA300).